The following is a 361-amino-acid chain: Uroporphyrinogen decarboxylase (361 aa).

Substrate-binding positions include R44–R48, D93, Y168, S223, and H337.

This sequence belongs to the uroporphyrinogen decarboxylase family. Homodimer.

The protein localises to the cytoplasm. It carries out the reaction uroporphyrinogen III + 4 H(+) = coproporphyrinogen III + 4 CO2. Its pathway is porphyrin-containing compound metabolism; protoporphyrin-IX biosynthesis; coproporphyrinogen-III from 5-aminolevulinate: step 4/4. In terms of biological role, catalyzes the decarboxylation of four acetate groups of uroporphyrinogen-III to yield coproporphyrinogen-III. This chain is Uroporphyrinogen decarboxylase, found in Thermobifida fusca (strain YX).